Reading from the N-terminus, the 164-residue chain is Phosphopantetheine adenylyltransferase (164 aa).

S11 is a substrate binding site. Residues 11–12 and H19 each bind ATP; that span reads SF. 3 residues coordinate substrate: K43, L75, and R89. ATP contacts are provided by residues 90–92, E100, and 125–131; these read GLR and YGYLSSS.

This sequence belongs to the bacterial CoaD family. In terms of assembly, homohexamer. Requires Mg(2+) as cofactor.

It is found in the cytoplasm. It carries out the reaction (R)-4'-phosphopantetheine + ATP + H(+) = 3'-dephospho-CoA + diphosphate. It functions in the pathway cofactor biosynthesis; coenzyme A biosynthesis; CoA from (R)-pantothenate: step 4/5. In terms of biological role, reversibly transfers an adenylyl group from ATP to 4'-phosphopantetheine, yielding dephospho-CoA (dPCoA) and pyrophosphate. The chain is Phosphopantetheine adenylyltransferase from Geobacter sulfurreducens (strain ATCC 51573 / DSM 12127 / PCA).